The sequence spans 216 residues: Protein-L-isoaspartate O-methyltransferase (216 aa).

The active site involves Ser61.

The protein belongs to the methyltransferase superfamily. L-isoaspartyl/D-aspartyl protein methyltransferase family.

It is found in the cytoplasm. It catalyses the reaction [protein]-L-isoaspartate + S-adenosyl-L-methionine = [protein]-L-isoaspartate alpha-methyl ester + S-adenosyl-L-homocysteine. Functionally, catalyzes the methyl esterification of L-isoaspartyl residues in peptides and proteins that result from spontaneous decomposition of normal L-aspartyl and L-asparaginyl residues. It plays a role in the repair and/or degradation of damaged proteins. The sequence is that of Protein-L-isoaspartate O-methyltransferase from Geobacter metallireducens (strain ATCC 53774 / DSM 7210 / GS-15).